The primary structure comprises 84 residues: Alpha-like toxin BmK M1 (84 aa).

The signal sequence occupies residues 1–19; that stretch reads MNYLVMISFALLLMTGVES. The LCN-type CS-alpha/beta domain maps to 21-83; sequence RDAYIAKPHN…VPIRVPGKCH (63 aa). Disulfide bonds link Cys-31–Cys-82, Cys-35–Cys-55, Cys-41–Cys-65, and Cys-45–Cys-67. Arg-84 is a propeptide (removed by a carboxypeptidase).

This sequence belongs to the long (4 C-C) scorpion toxin superfamily. Sodium channel inhibitor family. Alpha subfamily. Expressed by the venom gland.

It localises to the secreted. Its function is as follows. Alpha toxins bind voltage-independently at site-3 of sodium channels (Nav) and inhibit the inactivation of the activated channels thereby blocking neuronal transmission. This toxin is active against both mammals and insects, and is classified as an alpha-like toxin. It is active on Nav1.2/SCN2A (EC(50)=139-252 nM), Nav1.3/SCN3A (EC(50)=565 nM), Nav1.4/SCN4A and Nav1.5/SCN5A (EC(50)=195-500 nM), Nav1.6/SCN8A (EC(50)=214 nM), and drosophila DmNav1 (EC(50)=30 nM). In mNav1.6/SCN8A, the toxin induces a large increase in both transient and persistent currents, which correlates with a prominent reduction in the fast component of inactivating current. In rNav1.2/SCN2A and rNav1.3/SCN3A, toxin-increased currents is much smaller. Moreover, the toxin only accelerates the slow inactivation development and delay recovery of mNav1.6/SCN8A through binding to the channel in the open state. Is 6-fold more toxic than BmK-M2. In vivo, intrahippocampal injection into rat induces epileptiform responses. In addition, intraplantar injection into rat induces spontaneous nociception and hyperalgesia. The polypeptide is Alpha-like toxin BmK M1 (Olivierus martensii (Manchurian scorpion)).